The primary structure comprises 626 residues: Anaphase-promoting complex subunit CDC23 (626 aa).

The residue at position 59 (S59) is a Phosphoserine; by CDC28. 9 TPR repeats span residues 215 to 248 (ALLY…YSFN), 295 to 328 (MIKF…FPNF), 329 to 362 (TFLK…DPYR), 363 to 396 (LNDL…DRFR), 397 to 430 (PETC…DKKT), 431 to 464 (TNAW…CPRD), 465 to 498 (FKAW…KPWD), 499 to 532 (RRIW…SQTV), and 536 to 569 (TSIY…EELL).

Belongs to the APC8/CDC23 family. As to quaternary structure, the APC/C is composed of at least 13 subunits that stay tightly associated throughout the cell cycle: APC1, APC2, APC4, APC5, APC9, APC11, CDC16, CDC23, CDC26, CDC27, DOC1, MND2 and SWM1. CDC23 interacts directly with SWM1 and binds the destruction box (D-box) of the substrate cyclin CLB2. Post-translationally, phosphorylated by CDC28, which is required for the early mitotic activity of the APC/C in its CDC20-bound form.

The protein localises to the nucleus. The protein resides in the chromosome. It localises to the centromere. It is found in the kinetochore. It participates in protein modification; protein ubiquitination. Functionally, component of the anaphase promoting complex/cyclosome (APC/C), a cell cycle-regulated E3 ubiquitin-protein ligase complex that controls progression through mitosis and the G1 phase of the cell cycle. The APC/C is thought to confer substrate specificity and, in the presence of ubiquitin-conjugating E2 enzymes, it catalyzes the formation of protein-ubiquitin conjugates that are subsequently degraded by the 26S proteasome. In early mitosis, the APC/C is activated by CDC20 and targets securin PDS1, the B-type cyclin CLB5, and other anaphase inhibitory proteins for proteolysis, thereby triggering the separation of sister chromatids at the metaphase-to-anaphase transition. In late mitosis and in G1, degradation of CLB5 allows activation of the APC/C by CDH1, which is needed to destroy CDC20 and the B-type cyclin CLB2 to allow exit from mitosis and creating the low CDK state necessary for cytokinesis and for reforming prereplicative complexes in G1 prior to another round of replication. In Saccharomyces cerevisiae (strain ATCC 204508 / S288c) (Baker's yeast), this protein is Anaphase-promoting complex subunit CDC23 (CDC23).